Consider the following 509-residue polypeptide: Midnolin (509 aa).

The span at 1–12 (MDQHPSARSCSS) shows a compositional bias: polar residues. Residues 1 to 27 (MDQHPSARSCSSRGAAPSCESVSGEPP) are disordered. Residues 28-102 (MNLYIHSTTG…LTLVPTVEAG (75 aa)) enclose the Ubiquitin-like domain. Disordered regions lie at residues 172–295 (GSSE…NTPL), 370–404 (QCTS…ETQP), and 448–485 (KRLR…EGSL). Residues 176-190 (GTTGLSHGASGSASG) are compositionally biased toward low complexity. A compositionally biased stretch (basic residues) spans 196 to 209 (HNPHPHHPHQHPHH). The segment covering 220 to 231 (AFPPSPSIPSIP) has biased composition (pro residues). Residues 261-285 (PSSACAPSPSSPSPAASCPEASCSA) are compositionally biased toward low complexity. Over residues 286–295 (KTSGNCNTPL) the composition is skewed to polar residues. Over residues 376–386 (SPAPSPPPSPP) the composition is skewed to pro residues. Residues 387-400 (HTTGLTGLPTTVPS) show a composition bias toward low complexity.

Its subcellular location is the nucleus. The protein resides in the cytoplasm. It is found in the cytosol. It localises to the nucleolus. Its function is as follows. Facilitates ubiquitin-independent proteasomal degradation of polycomb protein CBX4. Plays a role in inhibiting the activity of glucokinase GCK and both glucose-induced and basal insulin secretion. The protein is Midnolin (midn) of Danio rerio (Zebrafish).